A 731-amino-acid chain; its full sequence is 1,4-alpha-glucan branching enzyme GlgB (731 aa).

D411 acts as the Nucleophile in catalysis. E464 functions as the Proton donor in the catalytic mechanism.

Belongs to the glycosyl hydrolase 13 family. GlgB subfamily. In terms of assembly, monomer.

The catalysed reaction is Transfers a segment of a (1-&gt;4)-alpha-D-glucan chain to a primary hydroxy group in a similar glucan chain.. The protein operates within glycan biosynthesis; glycogen biosynthesis. In terms of biological role, catalyzes the formation of the alpha-1,6-glucosidic linkages in glycogen by scission of a 1,4-alpha-linked oligosaccharide from growing alpha-1,4-glucan chains and the subsequent attachment of the oligosaccharide to the alpha-1,6 position. In Mycobacterium tuberculosis (strain ATCC 25177 / H37Ra), this protein is 1,4-alpha-glucan branching enzyme GlgB.